The following is a 407-amino-acid chain: Na(+)-translocating NADH-quinone reductase subunit F (407 aa).

The helical transmembrane segment at 3–23 threads the bilayer; sequence IILGVVMFTLIVLALTVMILF. A 2Fe-2S ferredoxin-type domain is found at 32–126; that stretch reads GDITIDINED…NLKIELPEEI (95 aa). Positions 69, 75, 78, and 110 each coordinate [2Fe-2S] cluster. One can recognise an FAD-binding FR-type domain in the interval 129–269; the sequence is VKKWECEVIS…SGPFGEFFAK (141 aa).

The protein belongs to the NqrF family. In terms of assembly, composed of six subunits; NqrA, NqrB, NqrC, NqrD, NqrE and NqrF. Requires [2Fe-2S] cluster as cofactor. FAD serves as cofactor.

It is found in the cell inner membrane. The catalysed reaction is a ubiquinone + n Na(+)(in) + NADH + H(+) = a ubiquinol + n Na(+)(out) + NAD(+). NQR complex catalyzes the reduction of ubiquinone-1 to ubiquinol by two successive reactions, coupled with the transport of Na(+) ions from the cytoplasm to the periplasm. The first step is catalyzed by NqrF, which accepts electrons from NADH and reduces ubiquinone-1 to ubisemiquinone by a one-electron transfer pathway. This Yersinia enterocolitica serotype O:8 / biotype 1B (strain NCTC 13174 / 8081) protein is Na(+)-translocating NADH-quinone reductase subunit F.